A 150-amino-acid polypeptide reads, in one-letter code: Arginine repressor (150 aa).

This sequence belongs to the ArgR family.

The protein resides in the cytoplasm. It functions in the pathway amino-acid biosynthesis; L-arginine biosynthesis [regulation]. Its function is as follows. Regulates arginine biosynthesis genes. This is Arginine repressor from Clostridium beijerinckii (strain ATCC 51743 / NCIMB 8052) (Clostridium acetobutylicum).